The sequence spans 147 residues: Hemoglobin subunit beta (147 aa).

Val2 carries the N-acetylvaline modification. The Globin domain occupies 3-147 (HLTPEEKNAV…VANALAHKYH (145 aa)). A Phosphothreonine modification is found at Thr13. Ser45 is modified (phosphoserine). At Lys60 the chain carries N6-acetyllysine. Residue His64 participates in heme b binding. The residue at position 83 (Lys83) is an N6-acetyllysine. His93 serves as a coordination point for heme b. At Cys94 the chain carries S-nitrosocysteine. Lys145 is subject to N6-acetyllysine.

It belongs to the globin family. Heterotetramer of two alpha chains and two beta chains. In terms of tissue distribution, red blood cells.

In terms of biological role, involved in oxygen transport from the lung to the various peripheral tissues. This chain is Hemoglobin subunit beta (HBB), found in Macaca fascicularis (Crab-eating macaque).